Consider the following 594-residue polypeptide: UvrABC system protein C (594 aa).

The 78-residue stretch at 14–91 folds into the GIY-YIG domain; that stretch reads DQPGCYLMKD…IKKHDPKYNI (78 aa). The UVR domain maps to 196 to 231; the sequence is KEVRSELETKMYEASEKLEFERAKELRDQIAHIDAI.

The protein belongs to the UvrC family. As to quaternary structure, interacts with UvrB in an incision complex.

It localises to the cytoplasm. Its function is as follows. The UvrABC repair system catalyzes the recognition and processing of DNA lesions. UvrC both incises the 5' and 3' sides of the lesion. The N-terminal half is responsible for the 3' incision and the C-terminal half is responsible for the 5' incision. This chain is UvrABC system protein C, found in Bacillus cereus (strain Q1).